A 247-amino-acid polypeptide reads, in one-letter code: tRNA pseudouridine synthase A (247 aa).

The active-site Nucleophile is aspartate 57. Residue tyrosine 115 coordinates substrate.

It belongs to the tRNA pseudouridine synthase TruA family. In terms of assembly, homodimer.

It catalyses the reaction uridine(38/39/40) in tRNA = pseudouridine(38/39/40) in tRNA. Formation of pseudouridine at positions 38, 39 and 40 in the anticodon stem and loop of transfer RNAs. This chain is tRNA pseudouridine synthase A, found in Chlorobaculum tepidum (strain ATCC 49652 / DSM 12025 / NBRC 103806 / TLS) (Chlorobium tepidum).